A 93-amino-acid polypeptide reads, in one-letter code: MLQSRNDHLRQTALRNAHTPALLLTTLTEPQDRSLAINNPQLAADVKTAWLKEDPSLLLFVEQPDLSLLRDLVKTGATRKIRSEARHRLEEKQ.

To E.coli YdbD C-terminal region.

This is an uncharacterized protein from Escherichia coli (strain K12).